Here is a 150-residue protein sequence, read N- to C-terminus: Ribonuclease H (150 aa).

Residues 1-142 form the RNase H type-1 domain; sequence MSDSVEIFTD…ADQLANRGVD (142 aa). Mg(2+) is bound by residues aspartate 10, glutamate 48, aspartate 70, and aspartate 134.

The protein belongs to the RNase H family. In terms of assembly, monomer. Mg(2+) is required as a cofactor.

The protein localises to the cytoplasm. It catalyses the reaction Endonucleolytic cleavage to 5'-phosphomonoester.. Its function is as follows. Endonuclease that specifically degrades the RNA of RNA-DNA hybrids. The sequence is that of Ribonuclease H from Pseudomonas fluorescens (strain ATCC BAA-477 / NRRL B-23932 / Pf-5).